The chain runs to 154 residues: Nuclear cap-binding protein subunit 2-A (154 aa).

MRNA contacts are provided by residues tyrosine 10, tyrosine 33, 102-106 (RVDWD), 113-117 (RQYGR), and 123-124 (QV). The RRM domain maps to 30 to 108 (STLYVGNLSF…RLIRVDWDAG (79 aa)).

This sequence belongs to the RRM NCBP2 family. Component of the nuclear cap-binding complex (CBC), a heterodimer composed of Cbp80 and Cbp20 that interacts with m7GpppG-capped RNA. Interacts with Ars2.

The protein localises to the nucleus. In terms of biological role, component of the cap-binding complex (CBC), which binds co-transcriptionally to the 5' cap of pre-mRNAs and is involved in various processes such as pre-mRNA splicing and RNA-mediated gene silencing (RNAi). The CBC complex is involved in miRNA-mediated RNA interference via its interaction with Ars2 and is required for primary microRNAs (miRNAs) processing. Also involved in innate immunity via the short interfering RNAs (siRNAs) processing machinery by restricting the viral RNA production. In the CBC complex, Cbp20 recognizes and binds capped RNAs (m7GpppG-capped RNA) but requires Cbp80 to stabilize the movement of its N-terminal loop and lock the CBC into a high affinity cap-binding state with the cap structure. This is Nuclear cap-binding protein subunit 2-A (Cbp20-A) from Drosophila virilis (Fruit fly).